We begin with the raw amino-acid sequence, 486 residues long: Ribulose bisphosphate carboxylase large chain (486 aa).

Residues N125 and T175 each contribute to the substrate site. Residue K177 is the Proton acceptor of the active site. K179 lines the substrate pocket. K203, D205, and E206 together coordinate Mg(2+). An N6-carboxylysine modification is found at K203. The active-site Proton acceptor is H295. Residues R296, H328, and S380 each coordinate substrate.

This sequence belongs to the RuBisCO large chain family. Type I subfamily. Heterohexadecamer of 8 large chains and 8 small chains. It depends on Mg(2+) as a cofactor.

The enzyme catalyses 2 (2R)-3-phosphoglycerate + 2 H(+) = D-ribulose 1,5-bisphosphate + CO2 + H2O. It carries out the reaction D-ribulose 1,5-bisphosphate + O2 = 2-phosphoglycolate + (2R)-3-phosphoglycerate + 2 H(+). Its function is as follows. RuBisCO catalyzes two reactions: the carboxylation of D-ribulose 1,5-bisphosphate, the primary event in carbon dioxide fixation, as well as the oxidative fragmentation of the pentose substrate. Both reactions occur simultaneously and in competition at the same active site. This Cereibacter sphaeroides (Rhodobacter sphaeroides) protein is Ribulose bisphosphate carboxylase large chain.